The following is a 135-amino-acid chain: Bacilliredoxin CHU_0972 (135 aa).

This sequence belongs to the bacilliredoxin family.

This Cytophaga hutchinsonii (strain ATCC 33406 / DSM 1761 / CIP 103989 / NBRC 15051 / NCIMB 9469 / D465) protein is Bacilliredoxin CHU_0972.